The primary structure comprises 855 residues: Sucrose synthase 7 (855 aa).

The GT-B glycosyltransferase stretch occupies residues 279–758 (SIFNIVIFSI…GLQRIYECYT (480 aa)).

It belongs to the glycosyltransferase 1 family. Plant sucrose synthase subfamily. In terms of tissue distribution, predominantly expressed in roots, flowers and immature seeds.

Its subcellular location is the cytoplasm. The protein resides in the membrane. The enzyme catalyses an NDP-alpha-D-glucose + D-fructose = a ribonucleoside 5'-diphosphate + sucrose + H(+). In terms of biological role, sucrose-cleaving enzyme that provides UDP-glucose and fructose for various metabolic pathways. The sequence is that of Sucrose synthase 7 (SUS7) from Oryza sativa subsp. japonica (Rice).